Consider the following 151-residue polypeptide: Arginine regulator (151 aa).

This sequence belongs to the ArgR family.

The protein localises to the cytoplasm. It participates in amino-acid degradation; L-arginine degradation via ADI pathway. In terms of biological role, regulates the transcription of the arc operon, involved in arginine catabolism. The polypeptide is Arginine regulator (argR1) (Clostridium perfringens (strain 13 / Type A)).